Consider the following 223-residue polypeptide: Icarapin (223 aa).

Residues 1 to 19 form the signal peptide; it reads MKTLGVLFIAAWFIACTHS. N-linked (GlcNAc...) asparagine glycosylation is found at N126, N142, N168, and N193. Residues 186–203 are compositionally biased toward polar residues; sequence LPTLIGKNETSTQSSRSV. The interval 186 to 223 is disordered; the sequence is LPTLIGKNETSTQSSRSVESVEDFDNEIPKNQGDVLTA.

Expressed by the venom duct.

The protein localises to the secreted. This chain is Icarapin, found in Apis mellifera carnica (Carniolan honeybee).